The following is a 314-amino-acid chain: MFSHITVLKEESVNGLAVKPGGVYVDCTLGGGGHSERILTALAGEGHLYAFDQDEAALSFAAEKLSRFKENITFIRSNFRHIKEELRMRGVDKVDGILFDLGVSSPQLDEASRGFSYHQDAPLDMRMDQSASLTAREVVNTWPFAKLHSIISRYGEEKFSKQIARKIEAYRLKQPIETTGELVDIIKEAIPAPARRAGGHPAKRTFQAIRIAVNDELGAFEDALTDGFELLNEGGRMAVITFHSLEDRLCKQMFKEKTKLPDLPKGLPIIPADQKAPFALITKKPIVANDEEIKANNRARSAKLRIIEKEKQTD.

Residues 32-34 (GGH), D52, F79, D100, and Q107 contribute to the S-adenosyl-L-methionine site.

Belongs to the methyltransferase superfamily. RsmH family.

The protein resides in the cytoplasm. The catalysed reaction is cytidine(1402) in 16S rRNA + S-adenosyl-L-methionine = N(4)-methylcytidine(1402) in 16S rRNA + S-adenosyl-L-homocysteine + H(+). Functionally, specifically methylates the N4 position of cytidine in position 1402 (C1402) of 16S rRNA. The chain is Ribosomal RNA small subunit methyltransferase H from Shouchella clausii (strain KSM-K16) (Alkalihalobacillus clausii).